The sequence spans 393 residues: Formate-dependent phosphoribosylglycinamide formyltransferase (393 aa).

Residues 22 to 23 (EL) and Glu82 contribute to the N(1)-(5-phospho-beta-D-ribosyl)glycinamide site. ATP is bound by residues Arg114, Lys155, 160-165 (SSGHGQ), 195-198 (EGFV), and Glu203. The ATP-grasp domain maps to 119-308 (RLAAEELGLP…QFALHARAVL (190 aa)). 2 residues coordinate Mg(2+): Glu267 and Glu279. Residues Asp286, Lys356, and 363–364 (RR) each bind N(1)-(5-phospho-beta-D-ribosyl)glycinamide.

Belongs to the PurK/PurT family. In terms of assembly, homodimer.

The enzyme catalyses N(1)-(5-phospho-beta-D-ribosyl)glycinamide + formate + ATP = N(2)-formyl-N(1)-(5-phospho-beta-D-ribosyl)glycinamide + ADP + phosphate + H(+). It functions in the pathway purine metabolism; IMP biosynthesis via de novo pathway; N(2)-formyl-N(1)-(5-phospho-D-ribosyl)glycinamide from N(1)-(5-phospho-D-ribosyl)glycinamide (formate route): step 1/1. Functionally, involved in the de novo purine biosynthesis. Catalyzes the transfer of formate to 5-phospho-ribosyl-glycinamide (GAR), producing 5-phospho-ribosyl-N-formylglycinamide (FGAR). Formate is provided by PurU via hydrolysis of 10-formyl-tetrahydrofolate. In Parabacteroides distasonis (strain ATCC 8503 / DSM 20701 / CIP 104284 / JCM 5825 / NCTC 11152), this protein is Formate-dependent phosphoribosylglycinamide formyltransferase.